The following is a 1262-amino-acid chain: Separin homolog sep-1 (1262 aa).

Residues 957 to 1051 (VQNAYYILDP…SVRTIPQALG (95 aa)) form the Peptidase C50 domain. C1040 is a catalytic residue. A disordered region spans residues 1147 to 1262 (KDQRNLPQTP…ARTPSRSRNL (116 aa)). Composition is skewed to polar residues over residues 1151–1162 (NLPQTPKTSART) and 1177–1197 (FVTSKSVPMTPIFSNNENKSP). A compositionally biased stretch (low complexity) spans 1243–1262 (TPTTRTTRSSARTPSRSRNL).

Forms a complex with securin-like protein ify-1 (via C-terminus). Interaction with ify-1 stabilizes sep-1. Also maintains the complex in the cytoplasm during interphase and recruits it to chromosomes during the first meiotic division. Expressed in oocytes. Expressed in male germline. Expressed in spermatocytes but undetectable in spermatids (at protein level).

It localises to the cytoplasm. It is found in the chromosome. The protein localises to the cytoplasmic granule. Its subcellular location is the cytoskeleton. The protein resides in the microtubule organizing center. It localises to the centrosome. It is found in the spindle. The protein localises to the cleavage furrow. Its subcellular location is the midbody. The enzyme catalyses All bonds known to be hydrolyzed by this endopeptidase have arginine in P1 and an acidic residue in P4. P6 is often occupied by an acidic residue or by a hydroxy-amino-acid residue, the phosphorylation of which enhances cleavage.. With respect to regulation, probably maintained in an inactive state via its interaction with securin ify-1 which acts as a pseudosubstrate thereby blocking access to the catalytic site. Upon ify-1 degradation at the onset of anaphase, sep-1 is likely to become active. In addition, interaction with ify-1 stabilizes sep-1. Cysteine protease, which plays a central role in homologous chromosome separation during meiosis I and in sister chromatid separation during embryonic mitosis. Promotes chromosome/sister chromatid segregation by cleaving the scc-1 (mitosis) and rec-8 (meiosis) subunits of the cohesin complex at the onset of anaphase. May cleave histone H3-like protein cpar-1 during meiosis I metaphase-anaphase transition. Promotes cortical granule exocytosis after oocyte fertilization during the first meiotic anaphase. Essential for embryonic cytokinesis by regulating rab-11-positive vesicle trafficking at the plasma membrane at the cleavage furrow and midbody. Regulates centriole segregation during spermatocyte meiosis. Required for embryonic anterior-posterior axis formation. In Caenorhabditis elegans, this protein is Separin homolog sep-1.